The following is a 353-amino-acid chain: MGCGASKVDKEGQARNDAIDAQLKKDRLAQKNEIKMLLLGAGESGKSTILKQMKLINHGSYSAEERESYKEIIFSNTVQSMRVLLDAMERLDIPLADATNAPRAEIILGLSPSIESSVLPRQVADAIHALWGDAGVQACFGRSREYQLNDSAKYYFDSIQRMAEPSYLPTDQDVLRSRVKTTGITETHFKIGELNYKLFDVGGQRSERKKWIHCFENVTAIIFLVAISEYDQLLYEDENVNRMQEALTLFDSICNSRWFVKTSIILFLNKIDLFKQKLPISPMADYFSDYTGGADYNSASEYIVNRFVSLNQSDAKTIYTHFTCATDTSQIKFVMSAVNDIIIQVNLRDCGLL.

Glycine 2 carries N-myristoyl glycine lipidation. A lipid anchor (S-palmitoyl cysteine) is attached at cysteine 3. The G-alpha domain maps to asparagine 32–leucine 353. The segment at lysine 35–threonine 48 is G1 motif. The GTP site is built by glutamate 43, serine 44, glycine 45, lysine 46, serine 47, threonine 48, aspartate 150, leucine 175, threonine 181, glycine 203, asparagine 269, lysine 270, aspartate 272, and alanine 325. Mg(2+) is bound at residue serine 47. Positions aspartate 173–threonine 181 are G2 motif. Residue threonine 181 coordinates Mg(2+). The tract at residues tyrosine 196–arginine 205 is G3 motif. Residues isoleucine 265–aspartate 272 form a G4 motif region. A G5 motif region spans residues threonine 323–threonine 328.

This sequence belongs to the G-alpha family. In terms of assembly, g proteins are composed of 3 units; alpha, beta and gamma. The alpha chain contains the guanine nucleotide binding site. Requires Mg(2+) as cofactor.

In terms of biological role, guanine nucleotide-binding proteins (G proteins) are involved as modulators or transducers in various transmembrane signaling systems. The chain is Guanine nucleotide-binding protein alpha-1 subunit (GPA1) from Mycosarcoma maydis (Corn smut fungus).